Consider the following 161-residue polypeptide: Phosphopantetheine adenylyltransferase (161 aa).

Serine 11 is a substrate binding site. ATP is bound by residues 11–12 (SF) and histidine 19. Residues lysine 43, leucine 75, and arginine 89 each coordinate substrate. ATP-binding positions include 90–92 (GLR), glutamate 100, and 125–131 (YSYLSSS).

Belongs to the bacterial CoaD family. In terms of assembly, homohexamer. Mg(2+) serves as cofactor.

The protein resides in the cytoplasm. It carries out the reaction (R)-4'-phosphopantetheine + ATP + H(+) = 3'-dephospho-CoA + diphosphate. Its pathway is cofactor biosynthesis; coenzyme A biosynthesis; CoA from (R)-pantothenate: step 4/5. In terms of biological role, reversibly transfers an adenylyl group from ATP to 4'-phosphopantetheine, yielding dephospho-CoA (dPCoA) and pyrophosphate. This chain is Phosphopantetheine adenylyltransferase, found in Geobacter sp. (strain M21).